Reading from the N-terminus, the 301-residue chain is Acetylglutamate kinase (301 aa).

Residues 72–73 (GG), R94, and N199 contribute to the substrate site.

Belongs to the acetylglutamate kinase family. ArgB subfamily.

The protein localises to the cytoplasm. It catalyses the reaction N-acetyl-L-glutamate + ATP = N-acetyl-L-glutamyl 5-phosphate + ADP. Its pathway is amino-acid biosynthesis; L-arginine biosynthesis; N(2)-acetyl-L-ornithine from L-glutamate: step 2/4. Catalyzes the ATP-dependent phosphorylation of N-acetyl-L-glutamate. The chain is Acetylglutamate kinase from Azorhizobium caulinodans (strain ATCC 43989 / DSM 5975 / JCM 20966 / LMG 6465 / NBRC 14845 / NCIMB 13405 / ORS 571).